Consider the following 239-residue polypeptide: Sugar fermentation stimulation protein homolog (239 aa).

Belongs to the SfsA family.

The chain is Sugar fermentation stimulation protein homolog from Synechococcus sp. (strain JA-3-3Ab) (Cyanobacteria bacterium Yellowstone A-Prime).